Consider the following 265-residue polypeptide: Photosystem II 22 kDa protein, chloroplastic (265 aa).

Residues 1–59 (MAQTMLLTSGVTAGHFLRNKSPLAQPKVHHLFLSGNSPVALPSRRQSFVPLALFKPKTK) constitute a chloroplast transit peptide. 2 repeat units span residues 54–158 (FKPK…FVDD) and 159–264 (PPTG…DGEE). Transmembrane regions (helical) follow at residues 96–116 (VAMIGFAASLLGEALTGKGIL), 130–150 (AEPLLLFFILFTLLGAIGALG), 195–215 (LFVGRLAQLGIAFSLIGEIIT), and 229–249 (IPIQDIEPLVLLNVAFFFFAA).

It belongs to the ELIP/psbS family.

It localises to the plastid. Its subcellular location is the chloroplast thylakoid membrane. In terms of biological role, plays an important role in non-photochemical quenching (NPQ), a process maintains the balance between dissipation and utilization of light energy to minimize generation of oxidizing molecules, thereby protecting the plant against photo-oxidative damage; acts upstream of DLDG1. Is not necessary for efficient light harvesting and photosynthesis. The polypeptide is Photosystem II 22 kDa protein, chloroplastic (Arabidopsis thaliana (Mouse-ear cress)).